The primary structure comprises 47 residues: PhoP/PhoQ regulator MgrB (47 aa).

The helical transmembrane segment at W6–V26 threads the bilayer.

This sequence belongs to the MgrB family. As to quaternary structure, may form homooligomers. Probably interacts with the periplasmic domain of PhoQ.

The protein resides in the cell inner membrane. Its function is as follows. PhoP-regulated transcription is redox-sensitive, being activated when the periplasm becomes more reducing. MgrB acts between DsbA/DsbB and PhoP/PhoQ in this pathway. Represses PhoP/PhoQ signaling, possibly by binding to the periplasmic domain of PhoQ, altering its activity and that of downstream effector PhoP. This chain is PhoP/PhoQ regulator MgrB, found in Enterobacter sp. (strain 638).